A 339-amino-acid polypeptide reads, in one-letter code: Tetraacyldisaccharide 4'-kinase (339 aa).

Residue 53 to 60 (TCGGAGKT) participates in ATP binding.

The protein belongs to the LpxK family.

The enzyme catalyses a lipid A disaccharide + ATP = a lipid IVA + ADP + H(+). It functions in the pathway glycolipid biosynthesis; lipid IV(A) biosynthesis; lipid IV(A) from (3R)-3-hydroxytetradecanoyl-[acyl-carrier-protein] and UDP-N-acetyl-alpha-D-glucosamine: step 6/6. Its function is as follows. Transfers the gamma-phosphate of ATP to the 4'-position of a tetraacyldisaccharide 1-phosphate intermediate (termed DS-1-P) to form tetraacyldisaccharide 1,4'-bis-phosphate (lipid IVA). In Bartonella henselae (strain ATCC 49882 / DSM 28221 / CCUG 30454 / Houston 1) (Rochalimaea henselae), this protein is Tetraacyldisaccharide 4'-kinase.